A 240-amino-acid chain; its full sequence is 2,3,4,5-tetrahydropyridine-2,6-dicarboxylate N-acetyltransferase (240 aa).

Belongs to the transferase hexapeptide repeat family. DapH subfamily.

The catalysed reaction is (S)-2,3,4,5-tetrahydrodipicolinate + acetyl-CoA + H2O = L-2-acetamido-6-oxoheptanedioate + CoA. It participates in amino-acid biosynthesis; L-lysine biosynthesis via DAP pathway; LL-2,6-diaminopimelate from (S)-tetrahydrodipicolinate (acetylase route): step 1/3. Catalyzes the transfer of an acetyl group from acetyl-CoA to tetrahydrodipicolinate. In Bacillus cereus (strain AH187), this protein is 2,3,4,5-tetrahydropyridine-2,6-dicarboxylate N-acetyltransferase.